The following is a 322-amino-acid chain: MKNNNYGVLLVNLGTPDEASPAAIKRFLSEFLHDKRVVDMTRWLWCPILHGVILPIRSPKVAKLYQSVWMEDGSPLMVYSQRQRQALEKQLNVPVALGMTYGTPSIATGLAELKQQGCNKVLVLPLYPQYSGTTTAAVFDRIAKELKQQPHIPELRFINHYFDHPDYIDALALSVTDFWAENGEPDYLLCSYHGIPKRYADNGDPYPQHCHATTEKLAERLAMPREKMSMSYQSIFGREEWLQPYTEVTIEALAQKGIKRLDVMCPAFSVDCLETLEEIAEQCKETFIKAGGDVFNLIPCLNDNEAHIRMMKNLVTQHSQGW.

Fe cation contacts are provided by His193 and Glu274.

This sequence belongs to the ferrochelatase family.

It localises to the cytoplasm. It catalyses the reaction heme b + 2 H(+) = protoporphyrin IX + Fe(2+). It functions in the pathway porphyrin-containing compound metabolism; protoheme biosynthesis; protoheme from protoporphyrin-IX: step 1/1. Functionally, catalyzes the ferrous insertion into protoporphyrin IX. This is Ferrochelatase from Photobacterium profundum (strain SS9).